The sequence spans 424 residues: Histidine--tRNA ligase (424 aa).

Belongs to the class-II aminoacyl-tRNA synthetase family. Homodimer.

The protein localises to the cytoplasm. It carries out the reaction tRNA(His) + L-histidine + ATP = L-histidyl-tRNA(His) + AMP + diphosphate + H(+). This Shewanella amazonensis (strain ATCC BAA-1098 / SB2B) protein is Histidine--tRNA ligase.